A 561-amino-acid polypeptide reads, in one-letter code: Zinc finger protein 394 (561 aa).

Position 12 is a phosphoserine (Ser-12). A Glycyl lysine isopeptide (Lys-Gly) (interchain with G-Cter in SUMO2) cross-link involves residue Lys-40. A disordered region spans residues 43–62 (EDSLGSWEPSYPAASPDPET). The 83-residue stretch at 64-146 (RLHFRQLRYQ…AVVRALQRAL (83 aa)) folds into the SCAN box domain. A KRAB domain is found at 155-230 (VTFEDMAVSL…LQEAFQGKRP (76 aa)). Glycyl lysine isopeptide (Lys-Gly) (interchain with G-Cter in SUMO2) cross-links involve residues Lys-203 and Lys-228. A compositionally biased stretch (basic and acidic residues) spans 238 to 247 (THEDRVEKQS). The disordered stretch occupies residues 238 to 283 (THEDRVEKQSGDPLPLKLENSPEAEGFNSISDVNKNGSIEGEDSKN). Residue Lys-254 forms a Glycyl lysine isopeptide (Lys-Gly) (interchain with G-Cter in SUMO2) linkage. A compositionally biased stretch (polar residues) spans 265 to 274 (NSISDVNKNG). A Glycyl lysine isopeptide (Lys-Gly) (interchain with G-Cter in SUMO2) cross-link involves residue Lys-282. 7 C2H2-type zinc fingers span residues 358-380 (YKCGNCGKSFKQRSDLFRHQRIH), 386-408 (YGCQECGKSFSQSAALTKHQRTH), 414-436 (YTCLKCGERFRQNSHLNRHQSTH), 442-463 (FKCEECGETCHISNLFRHQRLH), 469-491 (YKCEECEKSFKQRSDLFKHHRIH), 497-519 (YGCSVCGKRFNQSATLIKHQRIH), and 525-547 (YKCLECGERFRQSTHLIRHQRIH). Residue Lys-443 forms a Glycyl lysine isopeptide (Lys-Gly) (interchain with G-Cter in SUMO2) linkage.

This sequence belongs to the krueppel C2H2-type zinc-finger protein family.

The protein localises to the nucleus. May be involved in transcriptional regulation. In Pan paniscus (Pygmy chimpanzee), this protein is Zinc finger protein 394 (ZNF394).